We begin with the raw amino-acid sequence, 287 residues long: Arylamine N-acetyltransferase, liver isozyme (287 aa).

Cys68 functions as the Acyl-thioester intermediate in the catalytic mechanism. Active-site residues include His107 and Asp122.

This sequence belongs to the arylamine N-acetyltransferase family.

It catalyses the reaction an arylamine + acetyl-CoA = an N-acetylarylamine + CoA. The chain is Arylamine N-acetyltransferase, liver isozyme from Gallus gallus (Chicken).